A 369-amino-acid chain; its full sequence is MATPLFHADLTVHTQSHDYPIVITENAIAENSSMASQVAPYITGRQVLIVTNETVAPLYLKALQEELEAQFTVQVCVLPDGEQYKNQSSINQIYDVLMAVHFNRDVTLIALGGGVIGDMTGFAAASFMRGVNFIQIPTTLLSQVDSSVGGKTGINHPQGKNMIGAFWQPQMVLADMSTLKTLPARELSAGLAEVIKYALIMDAEFLTWLEHNLPAMMALDLAVLGEAVKRCCQYKADVVAQDERESGVRALLNFGHTFGHVIETHEGYGSWLHGEAVAAGMVQAAELSQKIGWLTSDEVACVKRILSLANLPITPPPIEVQTALDLMGHDKKVKHGQIRLILLKSLGEAVLTNDFDPHLLTDVLATHAP.

NAD(+) is bound by residues aspartate 80–lysine 85, glycine 114–aspartate 118, threonine 138–threonine 139, lysine 151, lysine 160, and threonine 178–threonine 181. Positions 193, 256, and 273 each coordinate Zn(2+).

This sequence belongs to the sugar phosphate cyclases superfamily. Dehydroquinate synthase family. Co(2+) is required as a cofactor. The cofactor is Zn(2+). It depends on NAD(+) as a cofactor.

Its subcellular location is the cytoplasm. The catalysed reaction is 7-phospho-2-dehydro-3-deoxy-D-arabino-heptonate = 3-dehydroquinate + phosphate. It participates in metabolic intermediate biosynthesis; chorismate biosynthesis; chorismate from D-erythrose 4-phosphate and phosphoenolpyruvate: step 2/7. Functionally, catalyzes the conversion of 3-deoxy-D-arabino-heptulosonate 7-phosphate (DAHP) to dehydroquinate (DHQ). The polypeptide is 3-dehydroquinate synthase (Psychrobacter cryohalolentis (strain ATCC BAA-1226 / DSM 17306 / VKM B-2378 / K5)).